Reading from the N-terminus, the 1068-residue chain is Self-sufficient cytochrome P450 monooxygenase CYP505U2 (1068 aa).

Heme is bound at residue Cys-408. Residues 464 to 498 (TTAGMVPESVQSLRQAQKSGKPGNSKSSANESMVG) form a disordered region. A compositionally biased stretch (polar residues) spans 472-498 (SVQSLRQAQKSGKPGNSKSSANESMVG). Positions 505 to 646 (VSIFYGSNSG…DLEKWEESIL (142 aa)) constitute a Flavodoxin-like domain. Residues 511–515 (SNSGS) and 590–622 (VFGC…QRVA) each bind FMN. One can recognise an FAD-binding FR-type domain in the interval 679 to 909 (KEFLEATVTS…RRSNPAFHPP (231 aa)).

This sequence in the N-terminal section; belongs to the cytochrome P450 family. The cofactor is FAD. FMN serves as cofactor. It depends on heme as a cofactor.

The catalysed reaction is 2 oxidized [cytochrome P450] + NADPH = 2 reduced [cytochrome P450] + NADP(+) + H(+). The enzyme catalyses an organic molecule + reduced [NADPH--hemoprotein reductase] + O2 = an alcohol + oxidized [NADPH--hemoprotein reductase] + H2O + H(+). It carries out the reaction dodecanoate + reduced [NADPH--hemoprotein reductase] + O2 = 3-hydroxydodecanoate + oxidized [NADPH--hemoprotein reductase] + H2O + H(+). It catalyses the reaction dodecanoate + reduced [NADPH--hemoprotein reductase] + O2 = 7-hydroxydodecanoate + oxidized [NADPH--hemoprotein reductase] + H2O + H(+). The catalysed reaction is dodecan-1-ol + reduced [NADPH--hemoprotein reductase] + O2 = 1,4-dodecanediol + oxidized [NADPH--hemoprotein reductase] + H2O + H(+). The enzyme catalyses dodecan-1-ol + reduced [NADPH--hemoprotein reductase] + O2 = 1,3-dodecanediol + oxidized [NADPH--hemoprotein reductase] + H2O + H(+). Functionally, self-sufficient cytochrome P450 monooxygenase that catalyzes the regioselective in-chain hydroxylation of alkanes, fatty alcohols, and fatty acids. Preferentially hydroxylates 1-dodecanol at C3 and C4 (positions omega-8 and omega-9). It is very likely that CYP505U2 prefers dodecanol, and probably other fatty alcohols, over fatty acids as substrates. Does not show any significant activity toward tetradecanoic acid. The protein is Self-sufficient cytochrome P450 monooxygenase CYP505U2 of Exserohilum turcicum (strain 28A) (Northern leaf blight fungus).